Here is a 425-residue protein sequence, read N- to C-terminus: Serine hydroxymethyltransferase 2 (425 aa).

(6S)-5,6,7,8-tetrahydrofolate-binding positions include leucine 121 and 125–127 (GHL). Position 230 is an N6-(pyridoxal phosphate)lysine (lysine 230).

Belongs to the SHMT family. Homodimer. Pyridoxal 5'-phosphate serves as cofactor.

It localises to the cytoplasm. It catalyses the reaction (6R)-5,10-methylene-5,6,7,8-tetrahydrofolate + glycine + H2O = (6S)-5,6,7,8-tetrahydrofolate + L-serine. It participates in one-carbon metabolism; tetrahydrofolate interconversion. It functions in the pathway amino-acid biosynthesis; glycine biosynthesis; glycine from L-serine: step 1/1. Its function is as follows. Catalyzes the reversible interconversion of serine and glycine with tetrahydrofolate (THF) serving as the one-carbon carrier. This reaction serves as the major source of one-carbon groups required for the biosynthesis of purines, thymidylate, methionine, and other important biomolecules. Also exhibits THF-independent aldolase activity toward beta-hydroxyamino acids, producing glycine and aldehydes, via a retro-aldol mechanism. The chain is Serine hydroxymethyltransferase 2 from Mycobacterium bovis (strain ATCC BAA-935 / AF2122/97).